The chain runs to 719 residues: Protein ENHANCED DISEASE RESISTANCE 2-like (719 aa).

Residues 3 to 110 (KVVYEGWMVR…WKEKIECVID (108 aa)) form the PH domain. Residues 134 to 173 (AGRTASSSDHESPFSALEDENDSQRDLLRRTTIGNGPPES) are disordered. Residues 180–392 (EFDAELSNQS…VSGLREWFSQ (213 aa)) enclose the START domain. Residues 414–478 (ALGKGGKHHH…ETDAKKTEEP (65 aa)) form a disordered region. The segment covering 426 to 439 (SLSIDQTNGASRNS) has biased composition (polar residues). Residues 442-461 (MDEDSDDDDEFQIPDSEPEP) are compositionally biased toward acidic residues. Residues 462 to 477 (ETSKQDQETDAKKTEE) show a composition bias toward basic and acidic residues. The helical transmembrane segment at 665–685 (GVLGLVIGVITSLVVEMAFLV) threads the bilayer.

It localises to the endoplasmic reticulum membrane. Its subcellular location is the cell membrane. The protein localises to the endosome membrane. In terms of biological role, binds to phosphatidylinositol-4-phosphate (PtdIns(4)P). May regulate the salicylic acid- (SA-) mediated resistance to pathogens. In Arabidopsis thaliana (Mouse-ear cress), this protein is Protein ENHANCED DISEASE RESISTANCE 2-like (EDR2L).